A 364-amino-acid chain; its full sequence is Peptide chain release factor 1 (364 aa).

Gln230 carries the post-translational modification N5-methylglutamine.

It belongs to the prokaryotic/mitochondrial release factor family. Post-translationally, methylated by PrmC. Methylation increases the termination efficiency of RF1.

It localises to the cytoplasm. In terms of biological role, peptide chain release factor 1 directs the termination of translation in response to the peptide chain termination codons UAG and UAA. This chain is Peptide chain release factor 1, found in Acidothermus cellulolyticus (strain ATCC 43068 / DSM 8971 / 11B).